A 48-amino-acid polypeptide reads, in one-letter code: Cuticle protein 5.1 (48 aa).

Functionally, component of the cuticle of migratory locust which contains more than 100 different structural proteins. The chain is Cuticle protein 5.1 from Locusta migratoria (Migratory locust).